We begin with the raw amino-acid sequence, 276 residues long: Ribonuclease 3 (276 aa).

Positions 1–29 (MRGTVSVPKKAEDAKADPPAKKKADTQAS) are disordered. Residues 9 to 25 (KKAEDAKADPPAKKKAD) show a composition bias toward basic and acidic residues. The RNase III domain maps to 31–157 (HTLLEGRLGY…VIGAVYLDQG (127 aa)). Glu-70 provides a ligand contact to Mg(2+). Residue Asp-74 is part of the active site. Residues Asp-143 and Glu-146 each coordinate Mg(2+). Residue Glu-146 is part of the active site. Residues 184-252 (DWKTSLQELT…AESAWRSIRA (69 aa)) enclose the DRBM domain. The interval 227 to 276 (YGTGTGRSKKEAEQQAAESAWRSIRAAADERAKATADAVDADPDEASASA) is disordered. Over residues 265–276 (VDADPDEASASA) the composition is skewed to acidic residues.

It belongs to the ribonuclease III family. Homodimer. Mg(2+) is required as a cofactor.

It is found in the cytoplasm. The catalysed reaction is Endonucleolytic cleavage to 5'-phosphomonoester.. Its function is as follows. Digests double-stranded RNA. Involved in the processing of primary rRNA transcript to yield the immediate precursors to the large and small rRNAs (23S and 16S). Also processes some mRNAs, and tRNAs when they are encoded in the rRNA operon. May modulate key aspects of gene expression as its absence has extensive effects on the abundance of about 200 different transcripts. Probably processes pre-crRNA and tracrRNA of type II CRISPR loci if present in the organism. This Streptomyces coelicolor (strain ATCC BAA-471 / A3(2) / M145) protein is Ribonuclease 3 (rnc).